The chain runs to 630 residues: Biosynthetic arginine decarboxylase (630 aa).

Lys-99 is modified (N6-(pyridoxal phosphate)lysine). 279–289 (FDVGGGLGVDY) contributes to the substrate binding site.

The protein belongs to the Orn/Lys/Arg decarboxylase class-II family. SpeA subfamily. The cofactor is Mg(2+). Pyridoxal 5'-phosphate serves as cofactor.

The enzyme catalyses L-arginine + H(+) = agmatine + CO2. Its pathway is amine and polyamine biosynthesis; agmatine biosynthesis; agmatine from L-arginine: step 1/1. Functionally, catalyzes the biosynthesis of agmatine from arginine. This Neisseria meningitidis serogroup B (strain ATCC BAA-335 / MC58) protein is Biosynthetic arginine decarboxylase.